Reading from the N-terminus, the 803-residue chain is Rho guanine nucleotide exchange factor 7 (803 aa).

N-acetylmethionine is present on methionine 1. Residues 1–133 enclose the Calponin-homology (CH) domain; it reads MNSAEQTVTW…SLVTLNKVTA (133 aa). N-acetylthreonine is present on asparagine 2. Phosphoserine is present on residues serine 153 and serine 176. Residues 184–243 enclose the SH3 domain; the sequence is NNQLVVRAKFNFQQTNEDELSFSKGDVIHVTRVEEGGWWEGTLNGRTGWFPSNYVREVKA. Residues serine 249 and serine 257 each carry the phosphoserine modification. In terms of domain architecture, DH spans 271-451; it reads YYNVVLQNIL…KNLSAQCQEV (181 aa). Residues 473 to 578 enclose the PH domain; that stretch reads DIKTLGNVTY…WVEHLQKQTK (106 aa). Phosphoserine occurs at positions 518, 560, and 579. The interval 580 to 655 is disordered; that stretch reads TSVGNPTIKP…TPKPWSLSCL (76 aa). Positions 593–606 are enriched in polar residues; sequence PSHTLPSHPVTPSS. Phosphoserine occurs at positions 645 and 664. Residues 678-690 show a composition bias toward basic residues; it reads KTMKKLLPKRKPE. 2 disordered regions span residues 678–704 and 748–773; these read KTMKKLLPKRKPERKPSDEEFASRKST and DDQPSLDSLGRRSSLSRLEPSDLSED. Residues 691-700 are compositionally biased toward basic and acidic residues; that stretch reads RKPSDEEFAS. A Phosphoserine; by CaMK1 modification is found at serine 694. Low complexity predominate over residues 752–765; sequence SLDSLGRRSSLSRL.

As to quaternary structure, interacts with PAK kinases through the SH3 domain. Interacts with GIT1 and TGFB1I1. Interacts with PTK2/FAK1 and RAC1. Interacts with ITCH and PARVB. Interacts with unphosphorylated PAK1. Interacts with SCRIB; interaction is direct and may play a role in regulation of apoptosis. Interacts with FRMPD4 (via N-terminus). Interacts with CaMK1. Interacts with BIN2. Interacts with YWHAZ. Interacts (via PH domain) with NOX1 (via FAD-binding FR-type domain). Interacts with SNX27. Post-translationally, phosphorylated by PTK2/FAK1; this promotes interaction with RAC1. Phosphorylated on Ser-694 by CaMK1; enhancement of GEF activity and downstream activation of RAC1.

Its subcellular location is the cell junction. It is found in the focal adhesion. The protein localises to the cell projection. It localises to the ruffle. The protein resides in the cytoplasm. Its subcellular location is the cell cortex. It is found in the lamellipodium. Functionally, acts as a RAC1 guanine nucleotide exchange factor (GEF) and can induce membrane ruffling. Functions in cell migration, attachment and cell spreading. Promotes targeting of RAC1 to focal adhesions. May function as a positive regulator of apoptosis. Downstream of NMDA receptors and CaMKK-CaMK1 signaling cascade, promotes the formation of spines and synapses in hippocampal neurons. The polypeptide is Rho guanine nucleotide exchange factor 7 (ARHGEF7) (Homo sapiens (Human)).